Consider the following 73-residue polypeptide: Putative defensin-like protein 33 (73 aa).

Residues 1–25 (MASNKVSFIFILFLCVLSTAEFGEA) form the signal peptide. Cystine bridges form between C33–C59, C45–C68, and C49–C70.

The protein belongs to the DEFL family.

Its subcellular location is the secreted. This Arabidopsis thaliana (Mouse-ear cress) protein is Putative defensin-like protein 33.